The sequence spans 526 residues: Neutrophil cytosol factor 2 (526 aa).

TPR repeat units lie at residues 37-70 (SRIC…DKHL), 71-104 (AVAY…LRGN), and 121-154 (CEVL…KSEP). At threonine 233 the chain carries Phosphothreonine. An SH3 1 domain is found at 240 to 299 (LEGEAHRVLFGFVPETKEELQVMPGNIVFVLKKGNDNWATVMFNGQKGLVPCNYLEPVEL). Positions 303 to 315 (PQQQPQEESSPQS) are enriched in low complexity. The disordered stretch occupies residues 303 to 346 (PQQQPQEESSPQSDIPAPPSSKAPGRPQLSPGQKQKEEPKEVKL). The span at 336–345 (KQKEEPKEVK) shows a compositional bias: basic and acidic residues. Positions 351–429 (PYTLKVHYKY…YCLTLWCENT (79 aa)) constitute a PB1 domain. Phosphoserine is present on serine 399. The disordered stretch occupies residues 433–458 (QGFPDEPKESEKADANNQTTEPQLKK). A compositionally biased stretch (basic and acidic residues) spans 437–446 (DEPKESEKAD). The 60-residue stretch at 457–516 (KKGSQVEALFSYEATQPEDLEFQEGDIILVLSKVNEEWLEGECKGKVGIFPKVFVEDCAT) folds into the SH3 2 domain.

It belongs to the NCF2/NOXA1 family. Component of the phagocyte NADPH oxidase complex composed of an obligatory core heterodimer formed by the membrane proteins CYBA and CYBB and the cytosolic regulatory subunits NCF1/p47-phox, NCF2/p67-phox, NCF4/p40-phox and the small GTPase RAC1 or RAC2. Part of a cytosolic complex composed at least by NCF1, NCF2 and NCF4. Interacts with NCF4. Interacts (via the C-terminal SH3 domain) with NCF1 (via C-terminus). Interacts with SYTL1 and RAC1. May interact with NOXO1. Interacts with S100A8 and calprotectin (S100A8/9). Interacts with GBP7 (via GB1/RHD3-type G domain). Interacts with CYBB; the interaction is enhanced in the presence of GBP7.

Its subcellular location is the cytoplasm. Its function is as follows. Subunit of the phagocyte NADPH oxidase complex that mediates the transfer of electrons from cytosolic NADPH to O2 to produce the superoxide anion (O2(-)). In the activated complex, electrons are first transferred from NADPH to flavin adenine dinucleotide (FAD) and subsequently transferred via two heme molecules to molecular oxygen, producing superoxide through an outer-sphere reaction. Activation of the NADPH oxidase complex is initiated by the assembly of cytosolic subunits of the NADPH oxidase complex with the core NADPH oxidase complex to form a complex at the plasma membrane or phagosomal membrane. This activation process is initiated by phosphorylation dependent binding of the cytosolic NCF1/p47-phox subunit to the C-terminus of CYBA/p22-phox. The chain is Neutrophil cytosol factor 2 from Homo sapiens (Human).